Reading from the N-terminus, the 403-residue chain is Pyruvate, phosphate dikinase regulatory protein 1, chloroplastic (403 aa).

The N-terminal 86 residues, 1 to 86, are a transit peptide targeting the chloroplast; the sequence is MALLSAMKLQ…NTTGPMRPIE (86 aa). The interval 1–108 is disordered; sequence MALLSAMKLQ…DVSSSSNGVS (108 aa). Low complexity-rich tracts occupy residues 17–26, 69–80, and 87–108; these read SSNLNPNSKP, STITNGSNNTTG, and SSSR…NGVS. 269–276 is an ADP binding site; that stretch reads GVSRTGKT.

It belongs to the pyruvate, phosphate/water dikinase regulatory protein family. PDRP subfamily. As to quaternary structure, interacts with PPDK1. In terms of tissue distribution, expressed in green tissues.

The protein localises to the plastid. Its subcellular location is the chloroplast stroma. It carries out the reaction N(tele)-phospho-L-histidyl/L-threonyl-[pyruvate, phosphate dikinase] + ADP = N(tele)-phospho-L-histidyl/O-phospho-L-threonyl-[pyruvate, phosphate dikinase] + AMP + H(+). The enzyme catalyses N(tele)-phospho-L-histidyl/O-phospho-L-threonyl-[pyruvate, phosphate dikinase] + phosphate + H(+) = N(tele)-phospho-L-histidyl/L-threonyl-[pyruvate, phosphate dikinase] + diphosphate. With respect to regulation, regulated by light/dark exposure. In terms of biological role, bifunctional serine/threonine kinase and phosphorylase involved in the dark/light-mediated regulation of PPDK by catalyzing its phosphorylation/dephosphorylation. Dark/light-induced changes in stromal concentrations of the competing ADP and Pi substrates govern the direction of the reaction. In the dark, phosphorylates the catalytic intermediate of PPDK (PPDK-HisP), inactivating it. Light exposure induces the phosphorolysis reaction that reactivates PPDK. Unlike the kinase function which can utilize either Thr or Ser as target, the phosphorylase function has a strict substrate requirement for threonyl phosphate. The polypeptide is Pyruvate, phosphate dikinase regulatory protein 1, chloroplastic (RP1) (Arabidopsis thaliana (Mouse-ear cress)).